A 302-amino-acid polypeptide reads, in one-letter code: Oxygen-dependent coproporphyrinogen-III oxidase (302 aa).

S94 is a substrate binding site. The a divalent metal cation site is built by H98 and H108. Residue H108 is the Proton donor of the active site. 110–112 contributes to the substrate binding site; the sequence is NVR. Positions 147 and 177 each coordinate a divalent metal cation. Residues 242-277 are important for dimerization; the sequence is YVEFNLVYDRGTLFGLQTGGRTESILMSMPPLVRWQ. 260 to 262 is a substrate binding site; that stretch reads GGR.

Belongs to the aerobic coproporphyrinogen-III oxidase family. Homodimer. A divalent metal cation serves as cofactor.

It localises to the cytoplasm. The catalysed reaction is coproporphyrinogen III + O2 + 2 H(+) = protoporphyrinogen IX + 2 CO2 + 2 H2O. Its pathway is porphyrin-containing compound metabolism; protoporphyrin-IX biosynthesis; protoporphyrinogen-IX from coproporphyrinogen-III (O2 route): step 1/1. Involved in the heme biosynthesis. Catalyzes the aerobic oxidative decarboxylation of propionate groups of rings A and B of coproporphyrinogen-III to yield the vinyl groups in protoporphyrinogen-IX. The sequence is that of Oxygen-dependent coproporphyrinogen-III oxidase from Shewanella baltica (strain OS155 / ATCC BAA-1091).